The chain runs to 294 residues: Protease HtpX homolog 2 (294 aa).

2 consecutive transmembrane segments (helical) span residues 15–35 and 36–56; these read MLFT…FLSY and YGTS…AQYF. His140 serves as a coordination point for Zn(2+). Residue Glu141 is part of the active site. His144 lines the Zn(2+) pocket. Transmembrane regions (helical) follow at residues 151–171 and 185–205; these read AVLT…RYSL and GGIM…FLLI. Glu213 is a Zn(2+) binding site.

It belongs to the peptidase M48B family. The cofactor is Zn(2+).

Its subcellular location is the cell membrane. This is Protease HtpX homolog 2 from Methanosarcina mazei (strain ATCC BAA-159 / DSM 3647 / Goe1 / Go1 / JCM 11833 / OCM 88) (Methanosarcina frisia).